The primary structure comprises 936 residues: Protein translocase subunit SecA (936 aa).

Residues Q90, 108 to 112 (GEGKT), and D499 each bind ATP.

Belongs to the SecA family. In terms of assembly, monomer and homodimer. Part of the essential Sec protein translocation apparatus which comprises SecA, SecYEG and auxiliary proteins SecDF. Other proteins may also be involved.

It is found in the cell inner membrane. It localises to the cellular thylakoid membrane. The protein localises to the cytoplasm. The catalysed reaction is ATP + H2O + cellular proteinSide 1 = ADP + phosphate + cellular proteinSide 2.. In terms of biological role, part of the Sec protein translocase complex. Interacts with the SecYEG preprotein conducting channel. Has a central role in coupling the hydrolysis of ATP to the transfer of proteins into and across the cell membrane, serving as an ATP-driven molecular motor driving the stepwise translocation of polypeptide chains across the membrane. Functionally, probably participates in protein translocation into and across both the cytoplasmic and thylakoid membranes in cyanobacterial cells. In Trichodesmium erythraeum (strain IMS101), this protein is Protein translocase subunit SecA.